The primary structure comprises 391 residues: Multidrug resistance protein MdtL (391 aa).

At 1-3 (MSR) the chain is on the cytoplasmic side. A helical transmembrane segment spans residues 4 to 24 (FLICSFALVLLYPAGIDMYLV). The Periplasmic portion of the chain corresponds to 25–41 (GLPRIAADLNASEAQLH). Residues 42–62 (IAFSVYLAGMAAAMLFAGKVA) form a helical membrane-spanning segment. The Cytoplasmic segment spans residues 63-68 (DRSGRK). Residues 69–89 (PVAIPGAALFIIASVFCSLAE) traverse the membrane as a helical segment. The Periplasmic portion of the chain corresponds to 90-92 (TST). Residues 93–113 (LFLAGRFLQGLGAGCCYVVAF) form a helical membrane-spanning segment. Residues 114 to 130 (AILRDTLDDRRRAKVLS) are Cytoplasmic-facing. The chain crosses the membrane as a helical span at residues 131–151 (LLNGITCIIPVLAPVLGHLIM). Residues 152–157 (LKFPWQ) lie on the Periplasmic side of the membrane. The chain crosses the membrane as a helical span at residues 158–178 (SLFWTMAIMGIAVLMLSLFIL). At 179–198 (KETRPAAPAASDKSRENSES) the chain is on the cytoplasmic side. Residues 199-221 (LLNRFFLSRVVITTLSVSVILTF) form a helical membrane-spanning segment. The Periplasmic segment spans residues 222–244 (VNTSPVLLMEIMGFERGEYATIM). The helical transmembrane segment at 245–265 (ALTAGVSMTVSFSTPFALGIF) threads the bilayer. The Cytoplasmic segment spans residues 266-268 (KPR). A helical membrane pass occupies residues 269-289 (TLMITSQVLFLAAGITLAVSP). Over 290-292 (SHA) the chain is Periplasmic. Residues 293–313 (ISLFGITLICAGFSVGFGVAM) traverse the membrane as a helical segment. At 314-330 (SQALGPFSLRAGVASST) the chain is on the cytoplasmic side. The helical transmembrane segment at 331–351 (LGIAQVCGSSLWIWLAAVVGI) threads the bilayer. The Periplasmic portion of the chain corresponds to 352 to 355 (GAWN). Residues 356–376 (MLIGILIACSIVSLLLIMFVA) form a helical membrane-spanning segment. The Cytoplasmic portion of the chain corresponds to 377–391 (PGRPVAAHEEIHHHA).

It belongs to the major facilitator superfamily. DHA1 family. MdtL (TC 2.A.1.2.22) subfamily.

It is found in the cell inner membrane. The polypeptide is Multidrug resistance protein MdtL (Shigella dysenteriae serotype 1 (strain Sd197)).